The following is a 591-amino-acid chain: Isocitrate dehydrogenase kinase/phosphatase (591 aa).

ATP is bound by residues 315-321 (APGVKGM) and Lys336. Asp371 is an active-site residue.

It belongs to the AceK family.

The protein localises to the cytoplasm. It carries out the reaction L-seryl-[isocitrate dehydrogenase] + ATP = O-phospho-L-seryl-[isocitrate dehydrogenase] + ADP + H(+). Its function is as follows. Bifunctional enzyme which can phosphorylate or dephosphorylate isocitrate dehydrogenase (IDH) on a specific serine residue. This is a regulatory mechanism which enables bacteria to bypass the Krebs cycle via the glyoxylate shunt in response to the source of carbon. When bacteria are grown on glucose, IDH is fully active and unphosphorylated, but when grown on acetate or ethanol, the activity of IDH declines drastically concomitant with its phosphorylation. This chain is Isocitrate dehydrogenase kinase/phosphatase, found in Pectobacterium carotovorum subsp. carotovorum (strain PC1).